The chain runs to 295 residues: ESX-3 secretion-associated protein EspG3 (295 aa).

This sequence belongs to the EspG family. Interacts specifically with ESX-3-dependent PE/PPE proteins.

The protein localises to the cytoplasm. Specific chaperone for cognate PE/PPE proteins. Plays an important role in preventing aggregation of PE/PPE dimers. The sequence is that of ESX-3 secretion-associated protein EspG3 from Mycobacterium tuberculosis (strain CDC 1551 / Oshkosh).